The following is a 150-amino-acid chain: Molybdopterin synthase catalytic subunit (150 aa).

Substrate contacts are provided by residues 37-39 (KVR), 103-104 (HR), K119, and 126-128 (KRE).

The protein belongs to the MoaE family. As to quaternary structure, heterotetramer of 2 MoaD subunits and 2 MoaE subunits. Also stable as homodimer. The enzyme changes between these two forms during catalysis.

It catalyses the reaction 2 [molybdopterin-synthase sulfur-carrier protein]-C-terminal-Gly-aminoethanethioate + cyclic pyranopterin phosphate + H2O = molybdopterin + 2 [molybdopterin-synthase sulfur-carrier protein]-C-terminal Gly-Gly + 2 H(+). It participates in cofactor biosynthesis; molybdopterin biosynthesis. In terms of biological role, converts molybdopterin precursor Z into molybdopterin. This requires the incorporation of two sulfur atoms into precursor Z to generate a dithiolene group. The sulfur is provided by MoaD. The polypeptide is Molybdopterin synthase catalytic subunit (moaE) (Salmonella typhi).